The chain runs to 263 residues: HTH-type transcriptional repressor NanR (263 aa).

The tract at residues M1 to R25 is disordered. The HTH gntR-type domain occupies K30–P98. A DNA-binding region (H-T-H motif) is located at residues E58–A77.

Belongs to the NanR family.

Its function is as follows. Transcriptional repressor that controls expression of the genes required for the catabolism of sialic acids. In Salmonella schwarzengrund (strain CVM19633), this protein is HTH-type transcriptional repressor NanR.